Consider the following 194-residue polypeptide: Ribonuclease HII (194 aa).

The RNase H type-2 domain occupies 3–193 (ILTAGVDEAG…VRNLLAQQAL (191 aa)). Residues Asp9, Glu10, and Asp101 each coordinate a divalent metal cation.

The protein belongs to the RNase HII family. Mn(2+) serves as cofactor. The cofactor is Mg(2+).

The protein localises to the cytoplasm. It catalyses the reaction Endonucleolytic cleavage to 5'-phosphomonoester.. In terms of biological role, endonuclease that specifically degrades the RNA of RNA-DNA hybrids. The polypeptide is Ribonuclease HII (rnhB) (Neisseria meningitidis serogroup B (strain ATCC BAA-335 / MC58)).